The sequence spans 328 residues: Lipoyl synthase (328 aa).

[4Fe-4S] cluster is bound by residues Cys-75, Cys-80, Cys-86, Cys-101, Cys-105, Cys-108, and Ser-315. Residues 87-304 enclose the Radical SAM core domain; sequence FNHGTATFMI…EREAKKMGYE (218 aa).

Belongs to the radical SAM superfamily. Lipoyl synthase family. [4Fe-4S] cluster is required as a cofactor.

Its subcellular location is the cytoplasm. It carries out the reaction [[Fe-S] cluster scaffold protein carrying a second [4Fe-4S](2+) cluster] + N(6)-octanoyl-L-lysyl-[protein] + 2 oxidized [2Fe-2S]-[ferredoxin] + 2 S-adenosyl-L-methionine + 4 H(+) = [[Fe-S] cluster scaffold protein] + N(6)-[(R)-dihydrolipoyl]-L-lysyl-[protein] + 4 Fe(3+) + 2 hydrogen sulfide + 2 5'-deoxyadenosine + 2 L-methionine + 2 reduced [2Fe-2S]-[ferredoxin]. The protein operates within protein modification; protein lipoylation via endogenous pathway; protein N(6)-(lipoyl)lysine from octanoyl-[acyl-carrier-protein]: step 2/2. In terms of biological role, catalyzes the radical-mediated insertion of two sulfur atoms into the C-6 and C-8 positions of the octanoyl moiety bound to the lipoyl domains of lipoate-dependent enzymes, thereby converting the octanoylated domains into lipoylated derivatives. The polypeptide is Lipoyl synthase (Colwellia psychrerythraea (strain 34H / ATCC BAA-681) (Vibrio psychroerythus)).